The chain runs to 275 residues: MSEQQIDLQHQANVIRKLTLEEIGKLGVGHVGGSLSICEVLAALYFRLMKIDPHNPGWPERDRLVLSKGHGGPALYAALALKGYFPIELLDTLNRPGTMLPSHCDMRRTVGIDMTTGSLGQGFSAAVGMALAVQMDHLPNTIYTIIGDGESDEGQIWEAAMFAGGRRLDHLIAFTDYNKMQIDGYTQEINPLEPLEDKWRAFGWHVQSIDGHNTDEIVSAVEQAKRAQGKPSMILLNTIKGKGASFSEGKLASHNMKLTEEMWKAAVAELEKEGA.

It belongs to the transketolase family. In terms of assembly, forms a complex with SqwH. The cofactor is thiamine diphosphate.

The enzyme catalyses 6-deoxy-6-sulfo-D-fructose + D-glyceraldehyde 3-phosphate = 4-deoxy-4-sulfo-D-erythrose + D-xylulose 5-phosphate. It carries out the reaction 4-deoxy-4-sulfo-D-erythrulose + D-glyceraldehyde 3-phosphate = sulfoacetaldehyde + D-xylulose 5-phosphate. Its function is as follows. Part of the sulfo-TK pathway, a D-sulfoquinovose degradation pathway that produces 2-hydroxyethane-1-sulfonate (isethionate). Catalyzes two steps of the pathway: the formation of 4-deoxy-4-sulfoerythrose (SE) and xylulose 5-phosphate from 6-deoxy-6-sulfo-D-fructose (SF) and glyceraldehyde 3-phosphate, and the formation of sulfoacetaldehyde (SA) and xylulose 5-phosphate from 4-deoxy-4-sulfo-D-erythrulose (SEu) and glyceraldehyde 3-phosphate. The sequence is that of 6-deoxy-6-sulfo-D-fructose transketolase subunit SqwG from Clostridium sp. (strain MSTE9).